A 57-amino-acid chain; its full sequence is Potassium channel toxin gamma-KTx 2.1 (57 aa).

The N-terminal stretch at 1-21 (MKISFVLLLTLFICSIGWSEA) is a signal peptide. Intrachain disulfides connect Cys-28–Cys-49, Cys-34–Cys-54, and Cys-38–Cys-56.

Belongs to the short scorpion toxin superfamily. Potassium channel inhibitor family. Gamma-KTx 2 subfamily. Expressed by the venom gland.

The protein localises to the secreted. Its function is as follows. Blocks human and/or rat Kv11.1/KCNH2/ERG1, Kv11.2/KCNH6/ERG2 and Kv11.3/KCNH7/ERG3 by binding to channel outer vestibule (S5P domain) with a 1:1 stoichiometry. Inhibition data are the following: hERG1 (reversible, Kd=7.7 nM, IC(50)=3.3 nM, IC(50)=11.9 nM), rERG1 (reversible, Kd=19 nM), hERG2 (reversible, Kd=77 nM), rERG2 (irreversible, Kd=4.2 nM), hERG3 (reversible, Kd=11.5 nM) and rERG3 (reversible, Kd=747 nM) potassium channels. Also has a minimal effect on rat ELK1/KCNH4 potassium channels (9% inhibition at 100 nM). Both this toxin and CnErgTx1 (AC Q86QT3) share mechanism of action and have overlapping binding sites on ERG1. The potency of these two toxins is not affected by elevating potassium ion concentration from 2 to 98 mM. In addition, at high toxin concentrations, block of ERG1 macroscopic currents by these two toxins is incomplete (88%). The blockade by this toxin is preferentially closed channel state-dependent, with a component of open, but not inactive state-dependent blockade. This toxin produces a concentration-dependent prolongation of QTc in the isolated rabbit heart (16.3% at 100 nM). The polypeptide is Potassium channel toxin gamma-KTx 2.1 (Mesobuthus eupeus (Lesser Asian scorpion)).